Consider the following 121-residue polypeptide: Large ribosomal subunit protein uL14 (121 aa).

This sequence belongs to the universal ribosomal protein uL14 family. As to quaternary structure, part of the 50S ribosomal subunit. Forms a cluster with proteins L3 and L19. In the 70S ribosome, L14 and L19 interact and together make contacts with the 16S rRNA in bridges B5 and B8.

Binds to 23S rRNA. Forms part of two intersubunit bridges in the 70S ribosome. The protein is Large ribosomal subunit protein uL14 of Prochlorococcus marinus (strain SARG / CCMP1375 / SS120).